Reading from the N-terminus, the 406-residue chain is Putative phosphate permease PH0640 (406 aa).

11 consecutive transmembrane segments (helical) span residues 2-22, 45-65, 83-103, 114-134, 140-160, 182-202, 207-227, 265-285, 288-308, 330-350, and 385-405; these read IPID…AWAI, AVLI…KTVT, VLIY…IIAT, SIIG…IVNW, VVLS…LVFR, FWIG…VLHG, IGIL…TSML, VANA…GLAG, VPVP…GVAT, FTID…GMPI, and FVTV…LLLI.

It belongs to the inorganic phosphate transporter (PiT) (TC 2.A.20) family.

It localises to the cell membrane. In terms of biological role, potential transporter for phosphate. The chain is Putative phosphate permease PH0640 from Pyrococcus horikoshii (strain ATCC 700860 / DSM 12428 / JCM 9974 / NBRC 100139 / OT-3).